Consider the following 595-residue polypeptide: GPI mannosyltransferase 3 (595 aa).

10 consecutive transmembrane segments (helical) span residues 58–78 (YAFPMLFEMSYYVAWILGVAT), 85–105 (LAHATALCGAVVPSGAAGVAA), 128–148 (GPRVVMAAVAACGEFYSVLLV), 185–207 (FFATRTFINSFEMTLTAVALYHW), 212–232 (GLDVGSLGFSASLAVAAFACL), 235–255 (PTNVLIWAVLGLFLVLNLVRS), 260–280 (LLLTLVAKVAAAGALAVCANI), 289–309 (GVLLPLLRFIEFNVTTPLAAF), 319–339 (LLQSVPLIVGYALPFFVGALL), and 413–433 (VQSLLYVLPVLSITAALVLNT).

Belongs to the glycosyltransferase 22 family. PIGB subfamily.

It localises to the endoplasmic reticulum membrane. The protein operates within glycolipid biosynthesis; glycosylphosphatidylinositol-anchor biosynthesis. Functionally, mannosyltransferase involved in glycosylphosphatidylinositol-anchor biosynthesis. Transfers the third mannose to Man2-GlcN-acyl-PI during GPI precursor assembly. This Eremothecium gossypii (strain ATCC 10895 / CBS 109.51 / FGSC 9923 / NRRL Y-1056) (Yeast) protein is GPI mannosyltransferase 3 (GPI10).